The sequence spans 553 residues: Transcription factor GAMYB (553 aa).

The span at 1–17 shows a compositional bias: basic and acidic residues; sequence MYRVKSESDCEMIHQEQ. The segment at 1 to 45 is disordered; that stretch reads MYRVKSESDCEMIHQEQMDSPVADDGSSGGSPHRGGGPPLKKGPW. Residues 27–38 show a composition bias toward gly residues; that stretch reads SSGGSPHRGGGP. HTH myb-type domains are found at residues 37 to 89 and 90 to 144; these read GPPL…ANHL and RPNL…KRCQ. DNA-binding regions (H-T-H motif) lie at residues 65–89 and 117–140; these read WNAV…ANHL and WARM…NTRI. The interval 464 to 488 is disordered; it reads PAQSTSMGSGEQVMGPKYEPGDTSP.

It is found in the nucleus. Functionally, transcriptional activator of gibberellin-dependent alpha-amylase expression in aleurone cells. Involved in pollen and floral organs development. May bind to the 5'-TAACAAA-3' box of alpha-amylase promoter. This Oryza sativa subsp. indica (Rice) protein is Transcription factor GAMYB (GAM1).